The primary structure comprises 108 residues: Urease subunit gamma (108 aa).

The protein belongs to the urease gamma subunit family. Heterotrimer of UreA (gamma), UreB (beta) and UreC (alpha) subunits. Three heterotrimers associate to form the active enzyme.

It localises to the cytoplasm. The enzyme catalyses urea + 2 H2O + H(+) = hydrogencarbonate + 2 NH4(+). It functions in the pathway nitrogen metabolism; urea degradation; CO(2) and NH(3) from urea (urease route): step 1/1. The sequence is that of Urease subunit gamma from Haloquadratum walsbyi (strain DSM 16790 / HBSQ001).